Consider the following 546-residue polypeptide: Chaperonin GroEL 1 (546 aa).

ATP is bound by residues 30-33 (TLGP), Lys-51, 87-91 (DGTTT), Gly-415, 479-481 (NAA), and Asp-495. Residues 526–546 (KEDAPMPGGMPGGMGGMGMDM) are disordered. Gly residues predominate over residues 534 to 546 (GMPGGMGGMGMDM).

This sequence belongs to the chaperonin (HSP60) family. As to quaternary structure, forms a cylinder of 14 subunits composed of two heptameric rings stacked back-to-back. Interacts with the co-chaperonin GroES.

It is found in the cytoplasm. It carries out the reaction ATP + H2O + a folded polypeptide = ADP + phosphate + an unfolded polypeptide.. Functionally, together with its co-chaperonin GroES, plays an essential role in assisting protein folding. The GroEL-GroES system forms a nano-cage that allows encapsulation of the non-native substrate proteins and provides a physical environment optimized to promote and accelerate protein folding. The sequence is that of Chaperonin GroEL 1 from Burkholderia ambifaria (strain ATCC BAA-244 / DSM 16087 / CCUG 44356 / LMG 19182 / AMMD) (Burkholderia cepacia (strain AMMD)).